Here is a 107-residue protein sequence, read N- to C-terminus: UPF0145 protein YbjQ (107 aa).

The protein belongs to the UPF0145 family.

This chain is UPF0145 protein YbjQ, found in Salmonella gallinarum (strain 287/91 / NCTC 13346).